We begin with the raw amino-acid sequence, 291 residues long: MAAGKEIRGKIKSVENTKKITKAMEMVSVSKMRKAQERMRAARPYSEKIRNIAANLGKANPEYTHAFMKKNDAKALGFIIVTSDKGLCGGLNTNLLRAVTAKLREAQAAGVAIESVAIGSKGLGFLNRIGARVVAHVTHLGDTPHLDKLIGPVKTLLDAYAEGKLSAVYLSYTKFINTIKQEPLVEQLLPLAEDSLKVEEGQHSWDYIYEPDAQSVIDELLVRYVESLVYQAVAENMASEHSARMVAMKAATDNAGNVISELKLVYNKTRQAGITKELSEIVSGAAAAAGV.

The protein belongs to the ATPase gamma chain family. In terms of assembly, F-type ATPases have 2 components, CF(1) - the catalytic core - and CF(0) - the membrane proton channel. CF(1) has five subunits: alpha(3), beta(3), gamma(1), delta(1), epsilon(1). CF(0) has three main subunits: a, b and c.

The protein resides in the cell inner membrane. Its function is as follows. Produces ATP from ADP in the presence of a proton gradient across the membrane. The gamma chain is believed to be important in regulating ATPase activity and the flow of protons through the CF(0) complex. This is ATP synthase gamma chain from Verminephrobacter eiseniae (strain EF01-2).